Here is a 129-residue protein sequence, read N- to C-terminus: Follitropin subunit beta (129 aa).

An N-terminal signal peptide occupies residues methionine 1–arginine 19. Cystine bridges form between cysteine 21–cysteine 69, cysteine 35–cysteine 84, cysteine 38–cysteine 122, cysteine 46–cysteine 100, cysteine 50–cysteine 102, and cysteine 105–cysteine 112. Residues asparagine 25 and asparagine 42 are each glycosylated (N-linked (GlcNAc...) asparagine).

Belongs to the glycoprotein hormones subunit beta family. In terms of assembly, heterodimer. The active follitropin is a heterodimer composed of an alpha chain/CGA shared with other hormones and a unique beta chain/FSHB shown here.

It is found in the secreted. Its function is as follows. Together with the alpha chain CGA constitutes follitropin, the follicle-stimulating hormone, and provides its biological specificity to the hormone heterodimer. Binds FSHR, a G protein-coupled receptor, on target cells to activate downstream signaling pathways. Follitropin is involved in follicle development and spermatogenesis in reproductive organs. This Ovis aries (Sheep) protein is Follitropin subunit beta (FSHB).